A 188-amino-acid chain; its full sequence is Acyl-acyl carrier protein thioesterase ATL2, chloroplastic (188 aa).

Residues 1–47 constitute a chloroplast transit peptide; the sequence is MFQATSTGAQIMHAAFPRSWRRGHVLPLRSAKIFKPLACLELRGSTG. Asp64 is a catalytic residue.

It belongs to the 4-hydroxybenzoyl-CoA thioesterase family. As to expression, expressed in endodermal and peridermal cells in young and mature roots, in boundaries of stem lateral organs and developing seeds.

The protein localises to the plastid. The protein resides in the chloroplast. Acyl-ACP thioesterase involved in the production of fatty acids and beta-keto fatty acids. Can produce beta-keto fatty acids of medium chain (8:0 and 10:0) and small amounts of 8:0 fatty acid when expressed in a heterologous organism (E.coli). May play a role in suberin biosynthesis. In Arabidopsis thaliana (Mouse-ear cress), this protein is Acyl-acyl carrier protein thioesterase ATL2, chloroplastic.